Here is a 156-residue protein sequence, read N- to C-terminus: Peptidyl-prolyl cis-trans isomerase H (156 aa).

One can recognise a PPIase cyclophilin-type domain in the interval 1 to 155 (TPAGRLKCEL…MAVRITQCGE (155 aa)).

This sequence belongs to the cyclophilin-type PPIase family. PPIase H subfamily.

Its subcellular location is the nucleus. The enzyme catalyses [protein]-peptidylproline (omega=180) = [protein]-peptidylproline (omega=0). Functionally, PPIases accelerate the folding of proteins. It catalyzes the cis-trans isomerization of proline imidic peptide bonds in oligopeptides. This is Peptidyl-prolyl cis-trans isomerase H (CYP3) from Mycosarcoma maydis (Corn smut fungus).